Consider the following 288-residue polypeptide: Cell division protein DivIB (288 aa).

The Cytoplasmic segment spans residues 1–25 (MEKVIDITERVPAMKKRRRRRTNFK). The helical transmembrane segment at 26 to 46 (FLALVTIFLFIIIILLYFQLP) threads the bilayer. At 47-288 (YSDIKKIDIK…LEEQNEEEPE (242 aa)) the chain is on the extracellular side. Residues 48–116 (SDIKKIDIKG…NEVQITVEEW (69 aa)) enclose the POTRA domain. Positions 253-263 (LIKENTEKTEE) are enriched in basic and acidic residues. The tract at residues 253–288 (LIKENTEKTEEPAEETENADTEEGGQLEEQNEEEPE) is disordered. Residues 264–288 (PAEETENADTEEGGQLEEQNEEEPE) are compositionally biased toward acidic residues.

It belongs to the FtsQ/DivIB family. DivIB subfamily.

Its subcellular location is the cell membrane. Its function is as follows. Cell division protein that may be involved in stabilizing or promoting the assembly of the division complex. The protein is Cell division protein DivIB of Solibacillus silvestris (strain StLB046) (Bacillus silvestris).